Consider the following 129-residue polypeptide: Large ribosomal subunit protein mL53 (129 aa).

The transit peptide at 1–50 directs the protein to the mitochondrion; it reads MREKLNLLAKLKSVVYKFDPLNPNTRSIRSFIPLTTCKRSRQLAPECSIS.

The protein belongs to the mitochondrion-specific ribosomal protein mL53 family.

Its subcellular location is the mitochondrion. In Dictyostelium discoideum (Social amoeba), this protein is Large ribosomal subunit protein mL53 (mrpl53).